A 92-amino-acid polypeptide reads, in one-letter code: Small ribosomal subunit protein uS19c (92 aa).

It belongs to the universal ribosomal protein uS19 family.

The protein resides in the plastid. Its subcellular location is the chloroplast. Functionally, protein S19 forms a complex with S13 that binds strongly to the 16S ribosomal RNA. The polypeptide is Small ribosomal subunit protein uS19c (Physcomitrium patens (Spreading-leaved earth moss)).